The sequence spans 318 residues: Ubiquitin-like domain-containing CTD phosphatase 1 (318 aa).

Residues 3-81 (LPIIVKWGGQ…IMMMGTREES (79 aa)) enclose the Ubiquitin-like domain. K117 is modified (N6-acetyllysine). Positions 133-294 (PREGKKLLVL…VKLTQYLKEI (162 aa)) constitute an FCP1 homology domain. Residues D143, D145, and D253 each contribute to the Mg(2+) site.

Mg(2+) is required as a cofactor.

It localises to the nucleus. It carries out the reaction O-phospho-L-seryl-[protein] + H2O = L-seryl-[protein] + phosphate. The enzyme catalyses O-phospho-L-threonyl-[protein] + H2O = L-threonyl-[protein] + phosphate. Functionally, dephosphorylates 26S nuclear proteasomes, thereby decreasing their proteolytic activity. Recruited to the 19S regulatory particle of the 26S proteasome through its interaction with 19S component PSMD2/RPN1. Once recruited, dephosphorylates 19S component PSMC2/RPT1 which impairs PSMC2 ATPase activity and disrupts 26S proteasome assembly. Has also been reported to stimulate the proteolytic activity of the 26S proteasome. The sequence is that of Ubiquitin-like domain-containing CTD phosphatase 1 (Ublcp1) from Rattus norvegicus (Rat).